The chain runs to 363 residues: MKRAPLITGLLLISTSCAYASSGGCGADSTSGATNYSSVVDDVTVNQTDNVTGREFTSATLSSTNWQYACSCSAGKAVKLVYMVSPVLTTTGHQTGYYKLNDSLDIKTTLQANDIPGLTTDQVVSVNTRFTQIKNNTVYSAATQTGVCQGDTSRYGPVNIGANTTFTLYVTKPFLGSMTIPKTDIAVIKGAWVDGMGSPSTGDFHDLVKLSIQGNLTAPQSCKINQGDVIKVNFGFINGQKFTTRNAMPDGFTPVDFDITYDCGDTSKIKNSLQMRIDGTTGVVDQYNLVARRRSSDNVPDVGIRIENLGGGVANIPFQNGILPVDPSGHGTVNMRAWPVNLVGGELETGKFQGTATITVIVR.

Positions 1-20 are cleaved as a signal peptide; it reads MKRAPLITGLLLISTSCAYA.

Belongs to the fimbrial protein family.

The protein resides in the fimbrium. Functionally, part of the yraHIJK fimbrial operon. Could contribute to adhesion to various surfaces in specific environmental niches. Increases adhesion to eukaryotic T24 bladder epithelial cells in the absence of fim operon. This is an uncharacterized protein from Escherichia coli (strain K12).